The chain runs to 195 residues: Peroxiredoxin (195 aa).

A Thioredoxin domain is found at 4–162 (AMIGKPAPEF…TLRLVQAFQF (159 aa)). Cys-49 (cysteine sulfenic acid (-SOH) intermediate) is an active-site residue.

The protein belongs to the peroxiredoxin family. AhpC/Prx1 subfamily. Homodimer; disulfide-linked, upon oxidation.

The catalysed reaction is a hydroperoxide + [thioredoxin]-dithiol = an alcohol + [thioredoxin]-disulfide + H2O. Thiol-specific peroxidase that catalyzes the reduction of hydrogen peroxide and organic hydroperoxides to water and alcohols, respectively. Plays a role in cell protection against oxidative stress by detoxifying peroxides and as sensor of hydrogen peroxide-mediated signaling events. The chain is Peroxiredoxin from Ascaris suum (Pig roundworm).